A 291-amino-acid polypeptide reads, in one-letter code: Bifunctional protein FolD (291 aa).

NADP(+) contacts are provided by residues 167 to 169, Ser192, and Ile233; that span reads GRS.

The protein belongs to the tetrahydrofolate dehydrogenase/cyclohydrolase family. As to quaternary structure, homodimer.

It carries out the reaction (6R)-5,10-methylene-5,6,7,8-tetrahydrofolate + NADP(+) = (6R)-5,10-methenyltetrahydrofolate + NADPH. The enzyme catalyses (6R)-5,10-methenyltetrahydrofolate + H2O = (6R)-10-formyltetrahydrofolate + H(+). Its pathway is one-carbon metabolism; tetrahydrofolate interconversion. Catalyzes the oxidation of 5,10-methylenetetrahydrofolate to 5,10-methenyltetrahydrofolate and then the hydrolysis of 5,10-methenyltetrahydrofolate to 10-formyltetrahydrofolate. The sequence is that of Bifunctional protein FolD from Dichelobacter nodosus (strain VCS1703A).